A 365-amino-acid polypeptide reads, in one-letter code: uncharacterized protein (365 aa).

The Radical SAM core domain maps to 45 to 289 (FSIGKSLTII…LKEVKKSNPK (245 aa)). [4Fe-4S] cluster is bound by residues Cys-60, Cys-68, and Cys-71.

[4Fe-4S] cluster is required as a cofactor.

This is an uncharacterized protein from Methanocaldococcus jannaschii (strain ATCC 43067 / DSM 2661 / JAL-1 / JCM 10045 / NBRC 100440) (Methanococcus jannaschii).